The sequence spans 472 residues: Poly(A) polymerase catalytic subunit (472 aa).

Active-site residues include aspartate 194 and aspartate 196.

The protein belongs to the poxviridae poly(A) polymerase catalytic subunit family. In terms of assembly, heterodimer of a large (catalytic) subunit and a small (regulatory) subunit.

The enzyme catalyses RNA(n) + ATP = RNA(n)-3'-adenine ribonucleotide + diphosphate. Polymerase that creates the 3'-poly(A) tail of mRNA's. The polypeptide is Poly(A) polymerase catalytic subunit (PAPL) (Fowlpox virus (strain NVSL) (FPV)).